The chain runs to 314 residues: GTPase-interacting component 1 (314 aa).

Disordered stretches follow at residues 112-156 (SRRH…KHDV), 199-221 (TMDSHHDGNETNNTPNGNKQLDS), and 241-261 (LGDSVSEKTNPSSPSVSSFSG). In terms of domain architecture, CRIB spans 126 to 139 (ISTPFDFHHISHAN). Positions 140 to 156 (GKREDNPLESHEEKHDV) are enriched in basic and acidic residues. Polar residues predominate over residues 208-221 (ETNNTPNGNKQLDS). Low complexity predominate over residues 251 to 260 (PSSPSVSSFS).

It belongs to the BORG/CEP family. As to quaternary structure, interacts with GTP-bound CDC42.

Its subcellular location is the bud neck. The protein resides in the bud tip. The protein localises to the cytoplasm. It localises to the cell cortex. It is found in the cytoskeleton. In terms of biological role, required for cell size and shape control, bud site selection, bud emergence, actin cytoskeletal organization, mitotic spindle orientation/positioning, and mating projection formation in response to mating pheromone. This Saccharomyces cerevisiae (strain ATCC 204508 / S288c) (Baker's yeast) protein is GTPase-interacting component 1 (GIC1).